The following is a 345-amino-acid chain: Ryncolin-1 (345 aa).

An N-terminal signal peptide occupies residues 1–19 (MKPWAAFHLIFLVASSLEG). Positions 48–118 (ILQSQPGIPG…DKGDKGEDCN (71 aa)) are disordered. The Collagen-like domain maps to 57 to 114 (GIPGVPGTNGSEGLKGDPGPQGPPGIRGPDGIRGEAGPKGDKGDQGDKGDKGDKGDKG). The span at 86–116 (DGIRGEAGPKGDKGDQGDKGDKGDKGDKGED) shows a compositional bias: basic and acidic residues. Residues 121-339 (GCLPTEVRNC…YADMKIRPQQ (219 aa)) form the Fibrinogen C-terminal domain. 2 disulfide bridges follow: cysteine 130–cysteine 158 and cysteine 282–cysteine 295.

This sequence belongs to the ficolin lectin family. Veficolin subfamily. Hydroxylated, possibly at Pro-80. As to expression, expressed by the venom duct.

The protein localises to the secreted. Initiates complement activation and/or interferes in platelet aggregation and/or blood coagulation. This chain is Ryncolin-1, found in Cerberus rynchops (Dog-faced water snake).